Consider the following 336-residue polypeptide: TBC1 domain family member 21 (336 aa).

Residues 57 to 265 (GLHPFVRTEA…RLWEVLLTGK (209 aa)) enclose the Rab-GAP TBC domain.

As to quaternary structure, interacts with ACTB. Interacts with ARMC12. Interacts with TOMM20 and DNAH7. Interacts with RAP1A. Interacts with RAB10. As to expression, expressed in testis, specifically in elongating and elongated spermatids (at protein level). Expressed in the sperm midpiece (at protein level).

The protein localises to the cytoplasmic vesicle. It is found in the secretory vesicle. It localises to the acrosome. The protein resides in the cytoplasm. Its subcellular location is the cytoskeleton. In terms of biological role, acts as a GTPase-activating protein for Rab family protein (s). Essential for the establishment of male fertility, and is required for both the production of normal sperm number and sperm function. Plays an important role in the formation of intact mitochondria, outer dense fibers and axoneme within the sperm tail. Essential for sperm mitochondrial sheath formation and for the interactions of ARMC12 with VDAC2 and VDAC3. May be involved in acrosome formation and cytoskeletal reorganization during spermiogenesis, possibly by regulating RAB3A activity. The polypeptide is TBC1 domain family member 21 (Mus musculus (Mouse)).